The sequence spans 348 residues: Cell surface glycoprotein CD200 receptor 1 (348 aa).

Residues 1-24 form the signal peptide; the sequence is MLCPWRTANLGLLLILTIFLVAEA. The Extracellular segment spans residues 29–265; the sequence is QPNNSLMLQT…PVPGAKKSAK (237 aa). 9 N-linked (GlcNAc...) asparagine glycosylation sites follow: asparagine 31, asparagine 60, asparagine 69, asparagine 116, asparagine 122, asparagine 185, asparagine 218, asparagine 233, and asparagine 247. 2 disulfide bridges follow: cysteine 83–cysteine 155 and cysteine 107–cysteine 123. Residues 160–251 enclose the Ig-like C2-type domain; sequence PDGNFHRGYH…SHLTGNKSLY (92 aa). Intrachain disulfides connect cysteine 190/cysteine 239 and cysteine 209/cysteine 227. Residues 266-286 form a helical membrane-spanning segment; the sequence is LYIPYIILTIIILTIVGFIWL. The Cytoplasmic portion of the chain corresponds to 287-348; it reads LKVNGCRKYK…SEVDTDLHTL (62 aa).

It belongs to the CD200R family. CD200 and CD200R1 interact via their respective N-terminal Ig-like domains. Interacts with Human herpesvirus 8 vOX2 protein. As to quaternary structure, (Microbial infection) Interacts with human herpesvirus 8/HHV-8 protein vOX2/K14. As to expression, expressed in granulocytes, monocytes, most T-cells, neutrophils, basophils and a subset of NK, NKT and B-cells (at protein level). Expressed in bone marrow, lymph nodes, spleen, lung, liver, spinal cord, kidney. Expressed in monocyte-derived dendritic and mast cells.

It localises to the cell membrane. Its subcellular location is the secreted. Its function is as follows. Inhibitory receptor for the CD200/OX2 cell surface glycoprotein. Limits inflammation by inhibiting the expression of pro-inflammatory molecules including TNF-alpha, interferons, and inducible nitric oxide synthase (iNOS) in response to selected stimuli. Also binds to HHV-8 K14 viral CD200 homolog with identical affinity and kinetics as the host CD200. The sequence is that of Cell surface glycoprotein CD200 receptor 1 (CD200R1) from Homo sapiens (Human).